We begin with the raw amino-acid sequence, 339 residues long: tRNA N6-adenosine threonylcarbamoyltransferase (339 aa).

2 residues coordinate Fe cation: histidine 107 and histidine 111. Substrate-binding positions include 129-133 (LVSGG), aspartate 162, glycine 175, and asparagine 279. Position 307 (aspartate 307) interacts with Fe cation.

This sequence belongs to the KAE1 / TsaD family. The cofactor is Fe(2+).

The protein localises to the cytoplasm. It carries out the reaction L-threonylcarbamoyladenylate + adenosine(37) in tRNA = N(6)-L-threonylcarbamoyladenosine(37) in tRNA + AMP + H(+). Required for the formation of a threonylcarbamoyl group on adenosine at position 37 (t(6)A37) in tRNAs that read codons beginning with adenine. Is involved in the transfer of the threonylcarbamoyl moiety of threonylcarbamoyl-AMP (TC-AMP) to the N6 group of A37, together with TsaE and TsaB. TsaD likely plays a direct catalytic role in this reaction. The sequence is that of tRNA N6-adenosine threonylcarbamoyltransferase from Campylobacter curvus (strain 525.92).